A 1285-amino-acid polypeptide reads, in one-letter code: Dermonecrotic toxin (1285 aa).

The chain crosses the membrane as a helical span at residues 402–422 (MLVPAVGIPINFALSATALGL).

It is found in the cytoplasm. The protein resides in the secreted. The protein localises to the host membrane. Functionally, this is a dermonecrotic toxin. This osteolytic toxin, induces bone resorption. Potent mitogen. This toxin is associated with the severe progressive form of the atrophic rhinitis, a major respiratory disease in pigs. This chain is Dermonecrotic toxin (toxA), found in Pasteurella multocida.